A 65-amino-acid polypeptide reads, in one-letter code: MSDKCGHCDCADKSQCVKKGTSYGVVIVDAEKSHFEMAEEVGYEENDGKCKCTTGCSCAGCNCGK.

It belongs to the metallothionein superfamily. Type 15 family.

In terms of biological role, metallothioneins have a high content of cysteine residues that bind various heavy metals. In Oryza sativa subsp. indica (Rice), this protein is Metallothionein-like protein 3B (MT3B).